Reading from the N-terminus, the 235-residue chain is Sugar fermentation stimulation protein homolog (235 aa).

The protein belongs to the SfsA family.

This is Sugar fermentation stimulation protein homolog from Aliivibrio salmonicida (strain LFI1238) (Vibrio salmonicida (strain LFI1238)).